The following is a 524-amino-acid chain: 2-isopropylmalate synthase (524 aa).

Residues 12 to 274 form the Pyruvate carboxyltransferase domain; the sequence is VIIFDTTLRD…WNRIETTMLT (263 aa). Mn(2+)-binding residues include Asp21, His209, His211, and Asn245. The interval 398-524 is regulatory domain; sequence KLMSLTVIAG…EDAPAVAVAG (127 aa).

This sequence belongs to the alpha-IPM synthase/homocitrate synthase family. LeuA type 1 subfamily. Homodimer. Requires Mn(2+) as cofactor.

It is found in the cytoplasm. The enzyme catalyses 3-methyl-2-oxobutanoate + acetyl-CoA + H2O = (2S)-2-isopropylmalate + CoA + H(+). Its pathway is amino-acid biosynthesis; L-leucine biosynthesis; L-leucine from 3-methyl-2-oxobutanoate: step 1/4. In terms of biological role, catalyzes the condensation of the acetyl group of acetyl-CoA with 3-methyl-2-oxobutanoate (2-ketoisovalerate) to form 3-carboxy-3-hydroxy-4-methylpentanoate (2-isopropylmalate). The polypeptide is 2-isopropylmalate synthase (Rhodopseudomonas palustris (strain ATCC BAA-98 / CGA009)).